A 553-amino-acid chain; its full sequence is Mucolipin-3 (553 aa).

Topologically, residues 1-62 (MADPEVVVSS…FWARGRKPWK (62 aa)) are cytoplasmic. The tract at residues 52–62 (KFWARGRKPWK) is interaction with phosphoinositides. Residues 63-83 (LAIQILKIAMVTIQLVLFGLS) traverse the membrane as a helical segment. Topologically, residues 84-283 (NQMVVAFKEE…VSGSIQKNTH (200 aa)) are extracellular. An extracellular/lumenal pore loop region spans residues 104–118 (KGYMDRMDDTYAVYT). N-linked (GlcNAc...) asparagine glycans are attached at residues Asn138, Asn172, and Asn205. Cysteines 159 and 185 form a disulfide. Cys238 and Cys269 are joined by a disulfide. A helical membrane pass occupies residues 284–304 (YMMIFDAFVILTCLVSLILCI). At 305 to 341 (RSVIRGLQLQQEFVNFFLLHYKKEVSVSDQMEFVNGW) the chain is on the cytoplasmic side. Residues 342–362 (YIMIIISDILTIIGSILKMEI) form a helical membrane-spanning segment. At 363–371 (QAKSLTSYD) the chain is on the extracellular side. A helical transmembrane segment spans residues 372 to 392 (VCSILLGTSTMLVWLGVIRYL). Residues 393 to 414 (GFFAKYNLLILTLQAALPNVIR) are Cytoplasmic-facing. Residues 415–435 (FCCCAAMIYLGYCFCGWIVLG) form a helical membrane-spanning segment. Residues 436 to 443 (PYHDKFRS) are Extracellular-facing. Residues 444-464 (LNMVSECLFSLINGDDMFATF) constitute an intramembrane region (pore-forming). A Selectivity filter motif is present at residues 456 to 459 (NGDD). Topologically, residues 465 to 475 (AKMQQKSYLVW) are extracellular. A helical transmembrane segment spans residues 476-497 (LFSRIYLYSFISLFIYMILSLF). The Cytoplasmic segment spans residues 498–553 (IALITDTYETIKQYQQDGFPETELRTFISECKDLPNSGKYRLEDDPPVSLFCCCKK).

Belongs to the transient receptor (TC 1.A.4) family. Polycystin subfamily. MCOLN3 sub-subfamily. As to quaternary structure, homotetramer. Can heterooligomerize with MCOLN1; heteromeric assemblies have different channel properties as compared to the respective homooligomers and may be tissue-specific. May heterooligomerize with TRPV5 to form a functional distinct ion channel. Interacts with GABARAPL2. N-glycosylated.

It localises to the cell membrane. The protein localises to the early endosome membrane. The protein resides in the late endosome membrane. It is found in the lysosome membrane. Its subcellular location is the cytoplasmic vesicle. It localises to the autophagosome membrane. It carries out the reaction Ca(2+)(in) = Ca(2+)(out). The enzyme catalyses K(+)(in) = K(+)(out). The catalysed reaction is Na(+)(in) = Na(+)(out). Its activity is regulated as follows. Channel activity is activated by PtdIns(3,5)P2 (phosphatidylinositol 3,5-bisphosphate). Inhibited by lumenal H(+) and Na(+). The channel pore shows dynamic behavior and undergoes spontaneous, Ca(2+)-dependent modulation when conducting Ca(2+). Its function is as follows. Nonselective cation channel probably playing a role in the regulation of membrane trafficking events. Acts as a Ca(2+)-permeable cation channel with inwardly rectifying activity. Mediates release of Ca(2+) from endosomes to the cytoplasm, contributes to endosomal acidification and is involved in the regulation of membrane trafficking and fusion in the endosomal pathway. Also permeable to Mg(2+), Na(+) and K(+). Does not seem to act as mechanosensory transduction channel in inner ear sensory hair cells. Proposed to play a critical role at the cochlear stereocilia ankle-link region during hair-bundle growth. Involved in the regulation of autophagy. Through association with GABARAPL2 may be involved in autophagosome formation possibly providing Ca(2+) for the fusion process. Through a possible and probably tissue-specific heteromerization with MCOLN1 may be at least in part involved in many lysosome-dependent cellular events. Possible heteromeric ion channel assemblies with TRPV5 show pharmacological similarity with TRPML3. In Homo sapiens (Human), this protein is Mucolipin-3 (MCOLN3).